A 388-amino-acid chain; its full sequence is tRNA 2-selenouridine synthase (388 aa).

The Rhodanese domain maps to 15-138 (FTADTPLIDV…ARQFLINTID (124 aa)). Cysteine 98 (S-selanylcysteine intermediate) is an active-site residue.

This sequence belongs to the SelU family. As to quaternary structure, monomer.

The enzyme catalyses 5-methylaminomethyl-2-thiouridine(34) in tRNA + selenophosphate + (2E)-geranyl diphosphate + H2O + H(+) = 5-methylaminomethyl-2-selenouridine(34) in tRNA + (2E)-thiogeraniol + phosphate + diphosphate. The catalysed reaction is 5-methylaminomethyl-2-thiouridine(34) in tRNA + (2E)-geranyl diphosphate = 5-methylaminomethyl-S-(2E)-geranyl-thiouridine(34) in tRNA + diphosphate. It catalyses the reaction 5-methylaminomethyl-S-(2E)-geranyl-thiouridine(34) in tRNA + selenophosphate + H(+) = 5-methylaminomethyl-2-(Se-phospho)selenouridine(34) in tRNA + (2E)-thiogeraniol. It carries out the reaction 5-methylaminomethyl-2-(Se-phospho)selenouridine(34) in tRNA + H2O = 5-methylaminomethyl-2-selenouridine(34) in tRNA + phosphate. Its function is as follows. Involved in the post-transcriptional modification of the uridine at the wobble position (U34) of tRNA(Lys), tRNA(Glu) and tRNA(Gln). Catalyzes the conversion of 2-thiouridine (S2U-RNA) to 2-selenouridine (Se2U-RNA). Acts in a two-step process involving geranylation of 2-thiouridine (S2U) to S-geranyl-2-thiouridine (geS2U) and subsequent selenation of the latter derivative to 2-selenouridine (Se2U) in the tRNA chain. The sequence is that of tRNA 2-selenouridine synthase from Nitrosomonas eutropha (strain DSM 101675 / C91 / Nm57).